Consider the following 419-residue polypeptide: Gamma-glutamyl phosphate reductase (419 aa).

The protein belongs to the gamma-glutamyl phosphate reductase family.

The protein localises to the cytoplasm. It catalyses the reaction L-glutamate 5-semialdehyde + phosphate + NADP(+) = L-glutamyl 5-phosphate + NADPH + H(+). It functions in the pathway amino-acid biosynthesis; L-proline biosynthesis; L-glutamate 5-semialdehyde from L-glutamate: step 2/2. Catalyzes the NADPH-dependent reduction of L-glutamate 5-phosphate into L-glutamate 5-semialdehyde and phosphate. The product spontaneously undergoes cyclization to form 1-pyrroline-5-carboxylate. This is Gamma-glutamyl phosphate reductase from Azoarcus sp. (strain BH72).